Reading from the N-terminus, the 325-residue chain is D-xylose 1-dehydrogenase (NADP(+)) 2 (325 aa).

The first 22 residues, M1–A22, serve as a signal peptide directing secretion.

This sequence belongs to the Gfo/Idh/MocA family. Homotetramer.

The protein localises to the secreted. The catalysed reaction is D-xylose + NADP(+) = D-xylono-1,5-lactone + NADPH + H(+). Functionally, NADP-dependent D-xylose dehydrogenase involved in the degradation of D-xylose, a major component of hemicelluloses such as xylan. Even if it shows D-xylose dehydrogenase activity, it is not essential for D-xylose degradation. The polypeptide is D-xylose 1-dehydrogenase (NADP(+)) 2 (Haloferax volcanii (strain ATCC 29605 / DSM 3757 / JCM 8879 / NBRC 14742 / NCIMB 2012 / VKM B-1768 / DS2) (Halobacterium volcanii)).